The following is a 200-amino-acid chain: Small ribosomal subunit protein uS4 (200 aa).

One can recognise an S4 RNA-binding domain in the interval 92 to 155 (SRLDNLVYRM…RNLTVVKEAL (64 aa)).

It belongs to the universal ribosomal protein uS4 family. Part of the 30S ribosomal subunit. Contacts protein S5. The interaction surface between S4 and S5 is involved in control of translational fidelity.

One of the primary rRNA binding proteins, it binds directly to 16S rRNA where it nucleates assembly of the body of the 30S subunit. Its function is as follows. With S5 and S12 plays an important role in translational accuracy. This is Small ribosomal subunit protein uS4 from Shouchella clausii (strain KSM-K16) (Alkalihalobacillus clausii).